A 396-amino-acid chain; its full sequence is 1-deoxy-D-xylulose 5-phosphate reductoisomerase (396 aa).

NADPH contacts are provided by Thr-10, Gly-11, Ser-12, Ile-13, and Asn-123. Residue Lys-124 coordinates 1-deoxy-D-xylulose 5-phosphate. An NADPH-binding site is contributed by Glu-125. Asp-149 contributes to the Mn(2+) binding site. Positions 150, 151, 185, and 208 each coordinate 1-deoxy-D-xylulose 5-phosphate. Glu-151 is a Mn(2+) binding site. Gly-214 lines the NADPH pocket. Positions 221, 226, 227, and 230 each coordinate 1-deoxy-D-xylulose 5-phosphate. Glu-230 is a binding site for Mn(2+).

This sequence belongs to the DXR family. Requires Mg(2+) as cofactor. The cofactor is Mn(2+).

The catalysed reaction is 2-C-methyl-D-erythritol 4-phosphate + NADP(+) = 1-deoxy-D-xylulose 5-phosphate + NADPH + H(+). Its pathway is isoprenoid biosynthesis; isopentenyl diphosphate biosynthesis via DXP pathway; isopentenyl diphosphate from 1-deoxy-D-xylulose 5-phosphate: step 1/6. Catalyzes the NADPH-dependent rearrangement and reduction of 1-deoxy-D-xylulose-5-phosphate (DXP) to 2-C-methyl-D-erythritol 4-phosphate (MEP). The chain is 1-deoxy-D-xylulose 5-phosphate reductoisomerase from Shewanella sp. (strain ANA-3).